The following is a 737-amino-acid chain: Delta and Notch-like epidermal growth factor-related receptor (737 aa).

Positions 1–34 (MQPRRAQAPGAQLLPALALLLLLLGAGPRGSSLA) are cleaved as a signal peptide. At 35–640 (NPVPAAPLSA…LTNMPRHSLY (606 aa)) the chain is on the extracellular side. EGF-like domains lie at 44–92 (APGP…ANCQ) and 94–133 (VADPCASNPCHHGNCSSSSSSSSDGYLCICNEGYEGPNCE). The segment at 44–133 (APGPCAAQPC…NEGYEGPNCE (90 aa)) is interaction with NOTCH1. Disulfide bonds link cysteine 48–cysteine 59, cysteine 53–cysteine 80, cysteine 82–cysteine 91, cysteine 98–cysteine 108, cysteine 103–cysteine 121, and cysteine 123–cysteine 132. N-linked (GlcNAc...) asparagine glycosylation is present at asparagine 223. 5 consecutive EGF-like domains span residues 309–348 (PGESHANDLECSGKGKCTTKPSEATFSCTCEEQYVGTFCE), 349–390 (EYDA…ELCQ), 392–428 (KIDYCILDPCRNGATCISSLSGFTCQCPEGYFGSACE), 430–466 (KVDPCASSPCQNNGTCYVDGVHFTCNCSPGFTGPTCA), and 468–503 (LIDFCALSPCAHGTCRSVGTSYKCLCDPGYHGLYCE). 23 disulfide bridges follow: cysteine 319–cysteine 336, cysteine 338–cysteine 347, cysteine 353–cysteine 364, cysteine 358–cysteine 378, cysteine 380–cysteine 389, cysteine 396–cysteine 407, cysteine 401–cysteine 416, cysteine 418–cysteine 427, cysteine 434–cysteine 445, cysteine 439–cysteine 454, cysteine 456–cysteine 465, cysteine 472–cysteine 482, cysteine 477–cysteine 491, cysteine 493–cysteine 502, cysteine 509–cysteine 520, cysteine 514–cysteine 529, cysteine 531–cysteine 540, cysteine 547–cysteine 558, cysteine 552–cysteine 567, cysteine 569–cysteine 578, cysteine 585–cysteine 596, cysteine 590–cysteine 605, and cysteine 607–cysteine 616. Positions 505-541 (EYNECLSAPCLNAATCRDLVNGYECVCLAEYKGTHCE) constitute an EGF-like 8; calcium-binding domain. The EGF-like 9 domain occupies 543–579 (YKDPCANVSCLNGATCDSDGLNGTCICAPGFTGEECD). Residues 546–568 (PCANVSCLNGATCDSDGLNGTCI) enclose the Follistatin-like domain. The N-linked (GlcNAc...) asparagine glycan is linked to asparagine 564. Residues 581-617 (DINECDSNPCHHGGSCLDQPNGYNCHCPHGWVGANCE) form the EGF-like 10; calcium-binding domain. The chain crosses the membrane as a helical span at residues 641 to 661 (IIIGALCVAFILMLIILIVGI). Topologically, residues 662–737 (CRISRIEYQG…LVTLIKTKDL (76 aa)) are cytoplasmic. Residues 677 to 680 (YEEF) are interaction with AP1G1 and somatodendritic targeting. Serine 685 carries the post-translational modification Phosphoserine. Tyrosine 711 and tyrosine 721 each carry phosphotyrosine. Serine 722 bears the Phosphoserine mark.

As to quaternary structure, interacts with AP1G1. Interacts with NOTCH1. In terms of tissue distribution, expressed in brain, spinal cord and adrenal gland.

The protein resides in the cell membrane. Its function is as follows. Activator of the NOTCH1 pathway. May mediate neuron-glia interaction during astrocytogenesis. The chain is Delta and Notch-like epidermal growth factor-related receptor (DNER) from Homo sapiens (Human).